Reading from the N-terminus, the 139-residue chain is Probable disulfide formation protein C 1 (139 aa).

Residues 8–27 (EYALFTAWGASFIATLGSLY) traverse the membrane as a helical segment. Cysteine 37 and cysteine 40 are disulfide-bonded. Helical transmembrane passes span 42 to 61 (YQRI…VVKK) and 68 to 85 (YSLP…YHYA). Cysteine 99 and cysteine 104 are disulfide-bonded. The helical transmembrane segment at 113-135 (GFVTIPFLALIGFITIAVCSFIV) threads the bilayer.

The protein belongs to the DsbB family. BdbC subfamily.

The protein resides in the cell membrane. Required for disulfide bond formation in some proteins. The protein is Probable disulfide formation protein C 1 (bdbC1) of Bacillus cereus (strain ATCC 10987 / NRS 248).